We begin with the raw amino-acid sequence, 110 residues long: Large ribosomal subunit protein uL22 (110 aa).

Belongs to the universal ribosomal protein uL22 family. As to quaternary structure, part of the 50S ribosomal subunit.

In terms of biological role, this protein binds specifically to 23S rRNA; its binding is stimulated by other ribosomal proteins, e.g. L4, L17, and L20. It is important during the early stages of 50S assembly. It makes multiple contacts with different domains of the 23S rRNA in the assembled 50S subunit and ribosome. The globular domain of the protein is located near the polypeptide exit tunnel on the outside of the subunit, while an extended beta-hairpin is found that lines the wall of the exit tunnel in the center of the 70S ribosome. This chain is Large ribosomal subunit protein uL22, found in Teredinibacter turnerae (strain ATCC 39867 / T7901).